A 249-amino-acid polypeptide reads, in one-letter code: tRNA pseudouridine synthase A (249 aa).

D53 serves as the catalytic Nucleophile. Residue Y111 participates in substrate binding.

It belongs to the tRNA pseudouridine synthase TruA family. In terms of assembly, homodimer.

The enzyme catalyses uridine(38/39/40) in tRNA = pseudouridine(38/39/40) in tRNA. In terms of biological role, formation of pseudouridine at positions 38, 39 and 40 in the anticodon stem and loop of transfer RNAs. The polypeptide is tRNA pseudouridine synthase A (Streptococcus pneumoniae (strain P1031)).